The primary structure comprises 153 residues: MRPMTIDIDELAFALDTPGIDHYLDLYSGKVLLISAEAPDPELDALLENEPERLLLIDPLSTTQSLGLMQDFLREVEEPHAYATLANALQSRKPFKAFKHSLMEYPELLQDWYRYQNERLREWALDWLEDNDIQPAARQSPTSLLPPPGKPFA.

This sequence belongs to the UPF0158 family.

This is UPF0158 protein PA5073 from Pseudomonas aeruginosa (strain ATCC 15692 / DSM 22644 / CIP 104116 / JCM 14847 / LMG 12228 / 1C / PRS 101 / PAO1).